We begin with the raw amino-acid sequence, 257 residues long: Pyridoxine 5'-phosphate synthase (257 aa).

A 3-amino-2-oxopropyl phosphate-binding site is contributed by Asn-6. 8 to 9 (DH) lines the 1-deoxy-D-xylulose 5-phosphate pocket. Residue Arg-17 coordinates 3-amino-2-oxopropyl phosphate. The active-site Proton acceptor is the His-41. 1-deoxy-D-xylulose 5-phosphate-binding residues include Arg-43 and His-48. Glu-68 (proton acceptor) is an active-site residue. Thr-98 lines the 1-deoxy-D-xylulose 5-phosphate pocket. Residue His-210 is the Proton donor of the active site. 3-amino-2-oxopropyl phosphate contacts are provided by residues Gly-211 and 232-233 (GQ).

It belongs to the PNP synthase family. As to quaternary structure, homooctamer; tetramer of dimers.

It is found in the cytoplasm. It catalyses the reaction 3-amino-2-oxopropyl phosphate + 1-deoxy-D-xylulose 5-phosphate = pyridoxine 5'-phosphate + phosphate + 2 H2O + H(+). Its pathway is cofactor biosynthesis; pyridoxine 5'-phosphate biosynthesis; pyridoxine 5'-phosphate from D-erythrose 4-phosphate: step 5/5. Functionally, catalyzes the complicated ring closure reaction between the two acyclic compounds 1-deoxy-D-xylulose-5-phosphate (DXP) and 3-amino-2-oxopropyl phosphate (1-amino-acetone-3-phosphate or AAP) to form pyridoxine 5'-phosphate (PNP) and inorganic phosphate. The polypeptide is Pyridoxine 5'-phosphate synthase (Campylobacter jejuni (strain RM1221)).